The chain runs to 239 residues: MSLLEYISDEDLFNEVETLLTKAKKKKDAAEKTFTSNVIDPFGALFEAPGFSSHEEWRNSELARQQQKTIQNHVGTFHQKILGHVEGWRDMGIGGIVDLLNEERRIIAEVKNKYSTVTGGDLADKYKGLDELVSPKHSRFKDYCAYFVNIIPRKPTRYNSPFTPSNKGSGTLCPSNPNIRIIDGASFYELVTGRPDALQELHSALPHAIEYILSERLGQQGFSIPDKDSFIKYFGLAYG.

It catalyses the reaction Endonucleolytic cleavage of DNA to give specific double-stranded fragments with terminal 5'-phosphates.. In terms of biological role, a P subtype restriction enzyme that recognizes the double-stranded sequence 5'-GGNCC-3'; the cleavage site is unknown. In Escherichia coli, this protein is Type II restriction enzyme Eco47II.